We begin with the raw amino-acid sequence, 360 residues long: Peptide chain release factor 1 (360 aa).

N5-methylglutamine is present on Q235. The interval 284 to 313 is disordered; that stretch reads AKRQQAEASTRRNLLGSGDRSDRNRTYNFP.

Belongs to the prokaryotic/mitochondrial release factor family. In terms of processing, methylated by PrmC. Methylation increases the termination efficiency of RF1.

Its subcellular location is the cytoplasm. Its function is as follows. Peptide chain release factor 1 directs the termination of translation in response to the peptide chain termination codons UAG and UAA. This Escherichia coli O127:H6 (strain E2348/69 / EPEC) protein is Peptide chain release factor 1.